The primary structure comprises 346 residues: Protein Rae1 (346 aa).

WD repeat units lie at residues 17-61 (ASPP…ATVP), 64-105 (MKTM…VMQV), 126-148 (LMTG…PMMT), and 255-289 (VNDI…KLKS).

It belongs to the WD repeat rae1 family. In terms of assembly, interacts with hiw; the interaction with Rae1 may protect hiw from autophagy-mediated degradation. Interacts with Nup98-96. Head (at protein level).

Its subcellular location is the cytoplasm. The protein resides in the perinuclear region. It is found in the nucleus. It localises to the nucleus envelope. The protein localises to the chromosome. In terms of biological role, probable component of the nuclear pore complex (NPC) which regulates the nuclear export of specific mRNAs and promotes cell cycle progression during mitosis and male meiosis. Acts with Nup98-96 to promote the nuclear export of specific mRNAs such as Moe, however it does not appear to be required for general nuclear mRNA transport. Essential mitotic and male meiotic cell cycle regulator with roles in many aspects of the cell cycle including chromatin organization and condensation, spindle assembly, chromosome segregation, and maintaining nuclear structure. During male meiosis it is required for completion of meiosis I, as well as accurate cytokinesis of the secondary spermatocytes, and postmeiotic differentiation of spermatids. Acts as a downstream regulatory target of the Hippo/SWH (Sav/Wts/Hpo) signaling pathway to promote mitotic cell cycle progression and proliferation during wing and eye development, and thereby plays a key role in integrating the regulation of proliferation with organ size control. When the Hippo/SWH signaling pathway is inactive, Rae1 acts independently of yki to increase organ size by promoting mitotic S-phase entry and increase cellular proliferation. When the Hippo/SWH signaling pathway is active it inhibits the activity of Rae1 in a Wts-dependent manner to restrict organ growth. However, Rae1 is also able to negatively regulate the levels and activity of yki likely by activating the core kinases of the Hippo/SWH signaling pathway hpo and Wts and increasing the protein levels of hpo, Mer and Wts; it is therefore likely that it functions as part of a negative feedback loop with the Hippo/SWH signaling pathway to regulate pathway homeostasis and prevent organ overgrowth. Promotes mitotic cell cycle progression, at least in part, by increasing the accumulation of mitotic cyclins such as CycB, possibly by directly up-regulating cyclin transcripts or by inhibiting the anaphase promoting complex/cyclosome (APC/C) activator fzy. Also required in presynaptic, postmitotic motor neurons to restrain synaptic terminal growth. Promotes the expression and stability of the an E3 ubiquitin ligase of hiw, and is likely to function in the regulation of synaptic growth by binding to hiw and protecting it from autophagy-mediated degradation. The chain is Protein Rae1 from Drosophila melanogaster (Fruit fly).